A 332-amino-acid chain; its full sequence is L-lactate dehydrogenase A chain (332 aa).

Position 2 is an N-acetylalanine (alanine 2). Lysine 5 is subject to N6-acetyllysine; alternate. Lysine 5 bears the N6-succinyllysine; alternate mark. The residue at position 14 (lysine 14) is an N6-acetyllysine. Threonine 18 carries the phosphothreonine modification. Residue glycine 29 to lysine 57 participates in NAD(+) binding. Lysine 57 bears the N6-acetyllysine; alternate mark. Lysine 57 is covalently cross-linked (Glycyl lysine isopeptide (Lys-Gly) (interchain with G-Cter in SUMO2); alternate). Lysine 81 carries the post-translational modification N6-acetyllysine. Arginine 99 contacts NAD(+). Arginine 106 lines the substrate pocket. N6-acetyllysine; alternate is present on lysine 118. Lysine 118 is subject to N6-succinyllysine; alternate. The residue at position 126 (lysine 126) is an N6-acetyllysine. Substrate contacts are provided by asparagine 138 and arginine 169. The Proton acceptor role is filled by histidine 193. N6-acetyllysine is present on residues lysine 224 and lysine 232. Phosphotyrosine is present on tyrosine 239. Lysine 243 is subject to N6-acetyllysine. A substrate-binding site is contributed by threonine 248. Phosphothreonine is present on threonine 309. Serine 310 is modified (phosphoserine). Lysine 318 is subject to N6-acetyllysine; alternate. An N6-succinyllysine; alternate modification is found at lysine 318. Position 322 is a phosphothreonine (threonine 322).

The protein belongs to the LDH/MDH superfamily. LDH family. In terms of assembly, homotetramer. Interacts with PTEN upstream reading frame protein MP31. In terms of processing, ISGylated.

The protein resides in the cytoplasm. It carries out the reaction (S)-lactate + NAD(+) = pyruvate + NADH + H(+). It participates in fermentation; pyruvate fermentation to lactate; (S)-lactate from pyruvate: step 1/1. Functionally, interconverts simultaneously and stereospecifically pyruvate and lactate with concomitant interconversion of NADH and NAD(+). The sequence is that of L-lactate dehydrogenase A chain (LDHA) from Pan troglodytes (Chimpanzee).